We begin with the raw amino-acid sequence, 260 residues long: ARL14 effector protein (260 aa).

Residue M1 is modified to N-acetylmethionine. K177 participates in a covalent cross-link: Glycyl lysine isopeptide (Lys-Gly) (interchain with G-Cter in SUMO2). S183 is subject to Phosphoserine.

As to quaternary structure, interacts with ARL14 and MYO1E.

The protein localises to the cytoplasm. In terms of biological role, through its interaction with ARL14 and MYO1E, may connect MHC class II-containing cytoplasmic vesicles to the actin network and hence controls the movement of these vesicles along the actin cytoskeleton in dendritic cells. This chain is ARL14 effector protein (ARL14EP), found in Bos taurus (Bovine).